The primary structure comprises 179 residues: Inner membrane-spanning protein YciB (179 aa).

Transmembrane regions (helical) follow at residues 22-42 (IYAA…YSWV), 50-70 (MALI…FFHN), 76-96 (WKVT…QWVM), 121-141 (LAWA…AFWL), and 149-169 (FKVF…GVYI).

The protein belongs to the YciB family.

Its subcellular location is the cell inner membrane. Plays a role in cell envelope biogenesis, maintenance of cell envelope integrity and membrane homeostasis. This Salmonella dublin (strain CT_02021853) protein is Inner membrane-spanning protein YciB.